The chain runs to 540 residues: Glucose-6-phosphate isomerase (540 aa).

Residue E350 is the Proton donor of the active site. Catalysis depends on residues H381 and K503.

It belongs to the GPI family.

The protein localises to the cytoplasm. It catalyses the reaction alpha-D-glucose 6-phosphate = beta-D-fructose 6-phosphate. It participates in carbohydrate biosynthesis; gluconeogenesis. Its pathway is carbohydrate degradation; glycolysis; D-glyceraldehyde 3-phosphate and glycerone phosphate from D-glucose: step 2/4. Functionally, catalyzes the reversible isomerization of glucose-6-phosphate to fructose-6-phosphate. This is Glucose-6-phosphate isomerase from Burkholderia pseudomallei (strain 1710b).